The sequence spans 240 residues: Competence protein ComFC (240 aa).

It belongs to the ComF/GntX family. Monomer and dimer in solution. Interacts with ComFA and DprA; ComFA-ComFC form rings about 150 Angstroms in diameter with apparent 6-fold symmetry.

Its function is as follows. Involved in transformation (genetic competence for DNA uptake). The sequence is that of Competence protein ComFC (comFC) from Bacillus subtilis (strain 168).